The sequence spans 334 residues: Putative 2-hydroxyacid dehydrogenase UNK4.10 (334 aa).

NAD(+) is bound by residues 166 to 167, 244 to 246, and aspartate 270; these read GI and TAR. Residue arginine 246 is part of the active site. Residue glutamate 275 is part of the active site. The active-site Proton donor is the histidine 293. NAD(+) is bound at residue 293 to 296; that stretch reads HLGT.

Belongs to the D-isomer specific 2-hydroxyacid dehydrogenase family.

This chain is Putative 2-hydroxyacid dehydrogenase UNK4.10, found in Schizosaccharomyces pombe (strain 972 / ATCC 24843) (Fission yeast).